Consider the following 133-residue polypeptide: Serine/threonine-protein kinase RsbT (133 aa).

The catalysed reaction is L-seryl-[protein] + ATP = O-phospho-L-seryl-[protein] + ADP + H(+). It catalyses the reaction L-threonyl-[protein] + ATP = O-phospho-L-threonyl-[protein] + ADP + H(+). Provides the crucial link between the upstream module (communication of environmental stress) and the downstream module (integration of the environmental signals with signals of energy stress) that compose the signal transduction pathway controlling the sigma-B factor. Phosphorylates and inactivates its specific antagonist protein RsbS thanks to its serine kinase activity. Upon phosphorylation of RsbS, RsbT is released to stimulate RsbU, a PP2C phosphatase, thereby initiating the signaling cascade that ultimately activates sigma-B. The activity of the RsbU phosphatase may be stimulated by a long-lived interaction with RsbT and the serine kinase function of RsbT is not required to directly modify RsbU. Also phosphorylates RsbR thanks to its threonine kinase activity, preventing it to phosphorylate RsbT. This chain is Serine/threonine-protein kinase RsbT (rsbT), found in Bacillus subtilis (strain 168).